The following is a 407-amino-acid chain: MLESLQPESELLHDEPDPGEKVYECDECRKTFSLEQHFVEHKKTHGGEKSPECTGCGEEFSKASSLTRHLRSRSRRESYKCGNCGRTFSQRGNFLSHQKQHAEERPSESKKTPVPMTTIVRNQRNAGNKPYACKECGKAFNGKSYLKEHEKIHTGEKPFECNQCGRAFSQKQYLIKHQNVHSGKKPFKCNECGKAFSQKENLIIHQRIHTGEKPYECKGCGKAFIQKSSLIRHQRSHTGEKPYTCKECGKAFSGKSNLTEHEKIHIGEKPYKCNECGTIFRQKQYLIKHHNIHTGEKPYECNKCGKAFSRITSLIVHVRIHTGDKPYECKVCGKAFCQSSSLTVHMRSHTGEKPYGCNECGKAFSQFSTLALHMRIHTGEKPYQCSECGKAFSQKSHHIRHQRIHIH.

The segment at 1-21 (MLESLQPESELLHDEPDPGEK) is disordered. The span at 10–21 (ELLHDEPDPGEK) shows a compositional bias: basic and acidic residues. A C2H2-type 1 zinc finger spans residues 23–45 (YECDECRKTFSLEQHFVEHKKTH). Residues 51–73 (PECTGCGEEFSKASSLTRHLRSR) form a C2H2-type 2; degenerate zinc finger. 11 C2H2-type zinc fingers span residues 79-101 (YKCG…QKQH), 131-153 (YACK…EKIH), 159-181 (FECN…QNVH), 187-209 (FKCN…QRIH), 215-237 (YECK…QRSH), 243-265 (YTCK…EKIH), 271-293 (YKCN…HNIH), 299-321 (YECN…VRIH), 327-349 (YECK…MRSH), 355-377 (YGCN…MRIH), and 383-405 (YQCS…QRIH).

This sequence belongs to the krueppel C2H2-type zinc-finger protein family. Binds DNA. Interacts with GATA4. As to expression, expressed in both embryonic, fetal and adult heart. Also expressed in lung, skeletal muscle and adrenal glands.

Its subcellular location is the nucleus. Its function is as follows. Transcription factor that acts as a cardiac regulator and an effector of alpha1-adrenergic signaling. Binds to PE response elements (PERE) present in the promoter of genes such as ANF/NPPA and acts as a direct transcriptional activator of NPPA. Also acts as a cofactor with GATA4, a key cardiac regulator. The sequence is that of Zinc finger protein 260 (Znf260) from Rattus norvegicus (Rat).